Reading from the N-terminus, the 350-residue chain is tRNA pseudouridine synthase D (350 aa).

Position 27 (Phe27) interacts with substrate. Residue Asp80 is the Nucleophile of the active site. Residue Asn129 coordinates substrate. Positions 155 to 303 (GVPNYFGVQR…VDTTRRAINL (149 aa)) constitute a TRUD domain. Residue Phe329 coordinates substrate.

The protein belongs to the pseudouridine synthase TruD family.

It catalyses the reaction uridine(13) in tRNA = pseudouridine(13) in tRNA. Its function is as follows. Responsible for synthesis of pseudouridine from uracil-13 in transfer RNAs. The protein is tRNA pseudouridine synthase D of Proteus mirabilis (strain HI4320).